A 79-amino-acid chain; its full sequence is Eumenine mastoparan-OD (79 aa).

The N-terminal stretch at 1-24 (MKQTIVIVLLAAVAMMACLQMVAA) is a signal peptide. AXPX repeat units lie at residues 24–27 (AEPL), 30–33 (AAPA), 44–47 (ASPI), 52–55 (ANPE), and 58–61 (ASPE). The propeptide occupies 25–62 (EPLPEAAPAPSPLAEAEALASPIAEALANPEALASPEA). Leucine amide is present on L76.

Expressed by the venom gland.

It is found in the secreted. Its subcellular location is the target cell membrane. Its function is as follows. Antimicrobial peptide with strong activity against the fungi C.albicans (MIC=6 uM) and B.cinerea (MIC=10 uM), and weaker activity against the Gram-negative bacterium E.coli (MIC=97 uM) and Gram-positive bacterium S.aureus (MIC=97 uM). Shows cytolytic activity against insect cell lines. Has potent hemolytic activity against ovine erythrocytes (80% at 50 uM), but has no hemolytic activity against human erythrocytes. In vivo, peptide injection in the vicinity of the head and thorax of lepidopteran larvae induces feeding disorder that lasts one or two days before recovering. The chain is Eumenine mastoparan-OD from Orancistrocerus drewseni (Solitary wasp).